Here is a 97-residue protein sequence, read N- to C-terminus: Aspartyl/glutamyl-tRNA(Asn/Gln) amidotransferase subunit C (97 aa).

This sequence belongs to the GatC family. In terms of assembly, heterotrimer of A, B and C subunits.

The enzyme catalyses L-glutamyl-tRNA(Gln) + L-glutamine + ATP + H2O = L-glutaminyl-tRNA(Gln) + L-glutamate + ADP + phosphate + H(+). The catalysed reaction is L-aspartyl-tRNA(Asn) + L-glutamine + ATP + H2O = L-asparaginyl-tRNA(Asn) + L-glutamate + ADP + phosphate + 2 H(+). Functionally, allows the formation of correctly charged Asn-tRNA(Asn) or Gln-tRNA(Gln) through the transamidation of misacylated Asp-tRNA(Asn) or Glu-tRNA(Gln) in organisms which lack either or both of asparaginyl-tRNA or glutaminyl-tRNA synthetases. The reaction takes place in the presence of glutamine and ATP through an activated phospho-Asp-tRNA(Asn) or phospho-Glu-tRNA(Gln). The chain is Aspartyl/glutamyl-tRNA(Asn/Gln) amidotransferase subunit C from Prochlorococcus marinus (strain MIT 9211).